The primary structure comprises 170 residues: UPF0690 protein C1orf52 homolog (170 aa).

2 disordered regions span residues 1–56 (MAAE…PDEL) and 124–170 (SNVY…KRKV). Positions 46–56 (DTKKLPGPDEL) are enriched in basic and acidic residues. The segment covering 144–159 (EEEEAREDSPPSDDEQ) has biased composition (acidic residues).

This sequence belongs to the UPF0690 family.

The polypeptide is UPF0690 protein C1orf52 homolog (Xenopus tropicalis (Western clawed frog)).